The sequence spans 183 residues: Ribulose bisphosphate carboxylase small subunit, chloroplastic (183 aa).

The N-terminal 59 residues, 1-59, are a transit peptide targeting the chloroplast; the sequence is MASSMISSGTVATVSADRPAPAQARMVAPFTGLKSSSASPVTRKSNDITSIASNGGRVQ.

The protein belongs to the RuBisCO small chain family. As to quaternary structure, heterohexadecamer of 8 large and 8 small subunits.

Its subcellular location is the plastid. It localises to the chloroplast. Functionally, ruBisCO catalyzes two reactions: the carboxylation of D-ribulose 1,5-bisphosphate, the primary event in carbon dioxide fixation, as well as the oxidative fragmentation of the pentose substrate. Both reactions occur simultaneously and in competition at the same active site. Although the small subunit is not catalytic it is essential for maximal activity. The protein is Ribulose bisphosphate carboxylase small subunit, chloroplastic of Malus sp. (Crab apple).